Consider the following 317-residue polypeptide: Protoheme IX farnesyltransferase (317 aa).

Transmembrane regions (helical) follow at residues 25-45, 54-74, 117-137, 167-189, 244-264, and 281-301; these read FFAL…LVGM, PVIG…SGCL, LMLG…TIVF, IGQA…IIFI, LGFG…AMLV, and AAMS…SALL.

The protein belongs to the UbiA prenyltransferase family. Protoheme IX farnesyltransferase subfamily.

It localises to the cell inner membrane. The catalysed reaction is heme b + (2E,6E)-farnesyl diphosphate + H2O = Fe(II)-heme o + diphosphate. The protein operates within porphyrin-containing compound metabolism; heme O biosynthesis; heme O from protoheme: step 1/1. In terms of biological role, converts heme B (protoheme IX) to heme O by substitution of the vinyl group on carbon 2 of heme B porphyrin ring with a hydroxyethyl farnesyl side group. This Methylobacterium nodulans (strain LMG 21967 / CNCM I-2342 / ORS 2060) protein is Protoheme IX farnesyltransferase.